We begin with the raw amino-acid sequence, 188 residues long: Elongation factor P (188 aa).

Belongs to the elongation factor P family.

It localises to the cytoplasm. Its pathway is protein biosynthesis; polypeptide chain elongation. In terms of biological role, involved in peptide bond synthesis. Stimulates efficient translation and peptide-bond synthesis on native or reconstituted 70S ribosomes in vitro. Probably functions indirectly by altering the affinity of the ribosome for aminoacyl-tRNA, thus increasing their reactivity as acceptors for peptidyl transferase. The polypeptide is Elongation factor P (Rickettsia akari (strain Hartford)).